Consider the following 229-residue polypeptide: Potassium/proton antiporter CemA (229 aa).

The next 3 membrane-spanning stretches (helical) occupy residues 7-27 (FTPLFYLASIVFLPWWISFSV), 107-127 (ILHFSTNIICFIILSGYSILG), and 189-209 (IISGLVSTFPVILDTIFKYWI).

It belongs to the CemA family.

The protein localises to the plastid. It is found in the chloroplast inner membrane. The enzyme catalyses K(+)(in) + H(+)(out) = K(+)(out) + H(+)(in). Contributes to K(+)/H(+) antiport activity by supporting proton efflux to control proton extrusion and homeostasis in chloroplasts in a light-dependent manner to modulate photosynthesis. Prevents excessive induction of non-photochemical quenching (NPQ) under continuous-light conditions. Indirectly promotes efficient inorganic carbon uptake into chloroplasts. The sequence is that of Potassium/proton antiporter CemA from Nicotiana tomentosiformis (Tobacco).